We begin with the raw amino-acid sequence, 231 residues long: NADH-ubiquinone oxidoreductase chain 4 (231 aa).

6 helical membrane passes run 1–21 (PIAG…YGII), 34–54 (MFLP…LTCL), 61–80 (SLIA…AIII), 84–106 (WGLT…LFCL), 128–148 (ILPM…ATPP), and 169–189 (TIIL…HMFL).

This sequence belongs to the complex I subunit 4 family.

It localises to the mitochondrion membrane. It carries out the reaction a ubiquinone + NADH + 5 H(+)(in) = a ubiquinol + NAD(+) + 4 H(+)(out). Functionally, core subunit of the mitochondrial membrane respiratory chain NADH dehydrogenase (Complex I) that is believed to belong to the minimal assembly required for catalysis. Complex I functions in the transfer of electrons from NADH to the respiratory chain. The immediate electron acceptor for the enzyme is believed to be ubiquinone. This is NADH-ubiquinone oxidoreductase chain 4 (MT-ND4) from Atropoides picadoi (Picado's pit viper).